The sequence spans 101 residues: Protein translation factor SUI1 homolog (101 aa).

Belongs to the SUI1 family.

This Methanosphaera stadtmanae (strain ATCC 43021 / DSM 3091 / JCM 11832 / MCB-3) protein is Protein translation factor SUI1 homolog.